We begin with the raw amino-acid sequence, 397 residues long: Elongation factor Tu (397 aa).

The region spanning 10-207 is the tr-type G domain; the sequence is KPHVNIGTIG…AVDESIPDPV (198 aa). Residues 19–26 form a G1 region; sequence GHVDHGKT. 19–26 lines the GTP pocket; that stretch reads GHVDHGKT. T26 serves as a coordination point for Mg(2+). Residues 63 to 67 are G2; sequence GITIN. The interval 84–87 is G3; that stretch reads DAPG. GTP-binding positions include 84–88 and 139–142; these read DAPGH and NKAD. The interval 139–142 is G4; it reads NKAD. A G5 region spans residues 177 to 179; sequence SGL.

This sequence belongs to the TRAFAC class translation factor GTPase superfamily. Classic translation factor GTPase family. EF-Tu/EF-1A subfamily. In terms of assembly, monomer.

It is found in the cytoplasm. The catalysed reaction is GTP + H2O = GDP + phosphate + H(+). Functionally, GTP hydrolase that promotes the GTP-dependent binding of aminoacyl-tRNA to the A-site of ribosomes during protein biosynthesis. This Tropheryma whipplei (strain Twist) (Whipple's bacillus) protein is Elongation factor Tu.